The chain runs to 103 residues: NADH-quinone oxidoreductase subunit K (103 aa).

Transmembrane regions (helical) follow at residues 7 to 27 (TEHGLYLAAALFILGLIGVLV), 31 to 51 (LIFMLLSLEIMLNATGLAFIV), and 65 to 85 (FMLILTLAAAEAAVALALILL).

Belongs to the complex I subunit 4L family. As to quaternary structure, NDH-1 is composed of 14 different subunits. Subunits NuoA, H, J, K, L, M, N constitute the membrane sector of the complex.

The protein resides in the cell inner membrane. The enzyme catalyses a quinone + NADH + 5 H(+)(in) = a quinol + NAD(+) + 4 H(+)(out). In terms of biological role, NDH-1 shuttles electrons from NADH, via FMN and iron-sulfur (Fe-S) centers, to quinones in the respiratory chain. The immediate electron acceptor for the enzyme in this species is believed to be ubiquinone. Couples the redox reaction to proton translocation (for every two electrons transferred, four hydrogen ions are translocated across the cytoplasmic membrane), and thus conserves the redox energy in a proton gradient. The chain is NADH-quinone oxidoreductase subunit K from Nitrosococcus oceani (strain ATCC 19707 / BCRC 17464 / JCM 30415 / NCIMB 11848 / C-107).